Reading from the N-terminus, the 90-residue chain is Small ribosomal subunit protein uS15 (90 aa).

It belongs to the universal ribosomal protein uS15 family. Part of the 30S ribosomal subunit. Forms a bridge to the 50S subunit in the 70S ribosome, contacting the 23S rRNA.

One of the primary rRNA binding proteins, it binds directly to 16S rRNA where it helps nucleate assembly of the platform of the 30S subunit by binding and bridging several RNA helices of the 16S rRNA. Functionally, forms an intersubunit bridge (bridge B4) with the 23S rRNA of the 50S subunit in the ribosome. The chain is Small ribosomal subunit protein uS15 from Helicobacter pylori (strain HPAG1).